Consider the following 461-residue polypeptide: Nicotianamine aminotransferase A (461 aa).

Residues 1 to 29 are disordered; it reads MVHQSNGHGEAAAAAANGKSNGHAAAANG. Low complexity predominate over residues 11–29; that stretch reads AAAAAANGKSNGHAAAANG. Position 289 is an N6-(pyridoxal phosphate)lysine (K289).

This sequence belongs to the class-I pyridoxal-phosphate-dependent aminotransferase family. It depends on pyridoxal 5'-phosphate as a cofactor. As to expression, expressed in roots, but not in leaves.

It carries out the reaction nicotianamine + 2-oxoglutarate = 3''-deamino-3''-oxonicotianamine + L-glutamate. Its function is as follows. Involved in biosynthesis of mugineic acid family phytosiderophores. This Hordeum vulgare (Barley) protein is Nicotianamine aminotransferase A.